The chain runs to 461 residues: uncharacterized protein (461 aa).

A disordered region spans residues 86 to 127 (KMKPNKDDDEEEDEDDEDDEDDEEEDNEEEDNEEENEITIAP). Over residues 92–122 (DDDEEEDEDDEDDEDDEEEDNEEEDNEEENE) the composition is skewed to acidic residues. Coiled-coil stretches lie at residues 95–123 (EEED…ENEI) and 405–459 (NKYI…KLKK).

This sequence belongs to the mimivirus L5 family.

This is an uncharacterized protein from Acanthamoeba polyphaga mimivirus (APMV).